Consider the following 517-residue polypeptide: MQEKIIILDFGSQTTQLIARRVRELNTYCEIVPYNKFPHNDPSIIGVILSGSPFSVYDESAFKVDLSDIRGKYPILGICYGAQFMSYTNGGKVEPAGTREYGRAHLSTFDQENPLLKNVREHSQVWMSHGDTITAIPENFKIIASTDKVAIAAYQIKEEKVWGVQFHPEVFHSEDGTQLLKNFVVDICGGKQDWSAASFIETTVAELKAQLGNDKVVLGLSGGVDSSVAAVLLNKAIGKNLTCIFVDHGMLRKNEFKNVLHDYECLGLNVIGVDASQKFFSELAGVEEPEKKRKIIGKGFIDVFDEEAHKIKDVKWLAQGTIYPDCIESLSITGTVIKSHHNVGGLPEKMNLKLCEPLRLLFKDEVRHVGRELGMPEHLITRHPFPGPGLAVRILGDITPEKVRILQDADDIYIQGLRDWKVKDSDGNETSLYHQVWQAGVILLPVQSVGVMGDERTYERAVALRAVTSTDAMTADWAHLPYEFMAKVSNDIINKVKGVNRVCYDISSKPPATIEWE.

Residues 4–193 form the Glutamine amidotransferase type-1 domain; that stretch reads KIIILDFGSQ…VVDICGGKQD (190 aa). Cys79 functions as the Nucleophile in the catalytic mechanism. Active-site residues include His167 and Glu169. Residues 194-382 enclose the GMPS ATP-PPase domain; that stretch reads WSAASFIETT…LGMPEHLITR (189 aa). 221 to 227 contacts ATP; that stretch reads SGGVDSS.

Homodimer.

It catalyses the reaction XMP + L-glutamine + ATP + H2O = GMP + L-glutamate + AMP + diphosphate + 2 H(+). It functions in the pathway purine metabolism; GMP biosynthesis; GMP from XMP (L-Gln route): step 1/1. In terms of biological role, catalyzes the synthesis of GMP from XMP. This is GMP synthase [glutamine-hydrolyzing] from Phocaeicola vulgatus (strain ATCC 8482 / DSM 1447 / JCM 5826 / CCUG 4940 / NBRC 14291 / NCTC 11154) (Bacteroides vulgatus).